A 171-amino-acid polypeptide reads, in one-letter code: uncharacterized protein (171 aa).

The tract at residues 139-171 is disordered; it reads ARKPTKSDDEEEEVGKMGGISSSINSWVQRQKL. The segment covering 158 to 171 has biased composition (polar residues); it reads ISSSINSWVQRQKL.

This is an uncharacterized protein from Caenorhabditis elegans.